Consider the following 111-residue polypeptide: Protein BEX5 (111 aa).

Residues 1–12 (MENVPKENKVVE) show a composition bias toward basic and acidic residues. A disordered region spans residues 1–37 (MENVPKENKVVEKAPVQNEAPALGGGEYQEPGGNVKG). The tract at residues 100–104 (HHDHH) is his cluster. Cys-108 lines the Zn(2+) pocket.

The protein belongs to the BEX family. In terms of processing, ubiquitinated. Degraded by the proteasome.

The protein localises to the cytoplasm. This chain is Protein BEX5 (BEX5), found in Homo sapiens (Human).